The sequence spans 498 residues: ATP synthase subunit beta, chloroplastic (498 aa).

Residue 172-179 (GGAGVGKT) participates in ATP binding.

This sequence belongs to the ATPase alpha/beta chains family. F-type ATPases have 2 components, CF(1) - the catalytic core - and CF(0) - the membrane proton channel. CF(1) has five subunits: alpha(3), beta(3), gamma(1), delta(1), epsilon(1). CF(0) has four main subunits: a(1), b(1), b'(1) and c(9-12).

It localises to the plastid. The protein localises to the chloroplast thylakoid membrane. It carries out the reaction ATP + H2O + 4 H(+)(in) = ADP + phosphate + 5 H(+)(out). Functionally, produces ATP from ADP in the presence of a proton gradient across the membrane. The catalytic sites are hosted primarily by the beta subunits. The protein is ATP synthase subunit beta, chloroplastic of Lemna minor (Common duckweed).